The sequence spans 161 residues: SsrA-binding protein (161 aa).

Positions 1–23 (MATKKNEQIKGRTDGLVAENRRS) are disordered.

The protein belongs to the SmpB family.

It localises to the cytoplasm. In terms of biological role, required for rescue of stalled ribosomes mediated by trans-translation. Binds to transfer-messenger RNA (tmRNA), required for stable association of tmRNA with ribosomes. tmRNA and SmpB together mimic tRNA shape, replacing the anticodon stem-loop with SmpB. tmRNA is encoded by the ssrA gene; the 2 termini fold to resemble tRNA(Ala) and it encodes a 'tag peptide', a short internal open reading frame. During trans-translation Ala-aminoacylated tmRNA acts like a tRNA, entering the A-site of stalled ribosomes, displacing the stalled mRNA. The ribosome then switches to translate the ORF on the tmRNA; the nascent peptide is terminated with the 'tag peptide' encoded by the tmRNA and targeted for degradation. The ribosome is freed to recommence translation, which seems to be the essential function of trans-translation. This is SsrA-binding protein from Hyphomonas neptunium (strain ATCC 15444).